The following is a 177-amino-acid chain: Large ribosomal subunit protein uL6 (177 aa).

The protein belongs to the universal ribosomal protein uL6 family. As to quaternary structure, part of the 50S ribosomal subunit.

In terms of biological role, this protein binds to the 23S rRNA, and is important in its secondary structure. It is located near the subunit interface in the base of the L7/L12 stalk, and near the tRNA binding site of the peptidyltransferase center. This is Large ribosomal subunit protein uL6 from Pseudomonas fluorescens (strain SBW25).